A 637-amino-acid chain; its full sequence is Nuclear receptor-binding protein homolog (637 aa).

The segment covering 1–14 (MSNSQANAGISGST) has biased composition (polar residues). Disordered regions lie at residues 1-60 (MSNS…TADA) and 74-99 (SEGV…ILEE). Low complexity predominate over residues 36–46 (PAATPPSQSTQ). Residues 88–98 (DDSEDESEILE) show a composition bias toward acidic residues. Residues 109-375 (REEVDQRDVP…ANDLLFHPLL (267 aa)) enclose the Protein kinase domain. 2 disordered regions span residues 465–489 (PNFR…EPVD) and 617–637 (PQEQ…TTSN). A phosphoserine mark is found at Ser-473, Ser-479, and Ser-482. The residue at position 484 (Thr-484) is a Phosphothreonine.

It belongs to the protein kinase superfamily. Ser/Thr protein kinase family.

Its subcellular location is the cytoplasm. The protein localises to the cell cortex. May play a role in subcellular trafficking between the endoplasmic reticulum and Golgi apparatus. The polypeptide is Nuclear receptor-binding protein homolog (Drosophila melanogaster (Fruit fly)).